Here is a 193-residue protein sequence, read N- to C-terminus: Pyridoxal 5'-phosphate synthase subunit PdxT (193 aa).

48–50 lines the L-glutamine pocket; that stretch reads GES. C80 acts as the Nucleophile in catalysis. L-glutamine-binding positions include R112 and 140 to 141; that span reads IR. Catalysis depends on charge relay system residues H176 and E178.

This sequence belongs to the glutaminase PdxT/SNO family. In the presence of PdxS, forms a dodecamer of heterodimers. Only shows activity in the heterodimer.

It carries out the reaction aldehydo-D-ribose 5-phosphate + D-glyceraldehyde 3-phosphate + L-glutamine = pyridoxal 5'-phosphate + L-glutamate + phosphate + 3 H2O + H(+). The catalysed reaction is L-glutamine + H2O = L-glutamate + NH4(+). The protein operates within cofactor biosynthesis; pyridoxal 5'-phosphate biosynthesis. Functionally, catalyzes the hydrolysis of glutamine to glutamate and ammonia as part of the biosynthesis of pyridoxal 5'-phosphate. The resulting ammonia molecule is channeled to the active site of PdxS. This is Pyridoxal 5'-phosphate synthase subunit PdxT from Mycolicibacterium smegmatis (strain ATCC 700084 / mc(2)155) (Mycobacterium smegmatis).